Reading from the N-terminus, the 48-residue chain is M-oxotoxin-Ot1c (48 aa).

The protein resides in the secreted. It is found in the target cell membrane. Its function is as follows. Disrupts cell membranes, particularly those rich in phosphocholine, through formation of pores. Has antimicrobial activity, hemolytic activity and insecticidal activity. The sequence is that of M-oxotoxin-Ot1c from Oxyopes takobius (Lynx spider).